The following is a 180-amino-acid chain: Bifunctional protein PyrR (180 aa).

Residues 101-113 (LIVVDDVLFTGRT) carry the PRPP-binding motif.

This sequence belongs to the purine/pyrimidine phosphoribosyltransferase family. PyrR subfamily. Homodimer and homohexamer; in equilibrium.

The catalysed reaction is UMP + diphosphate = 5-phospho-alpha-D-ribose 1-diphosphate + uracil. Its function is as follows. Regulates transcriptional attenuation of the pyrimidine nucleotide (pyr) operon by binding in a uridine-dependent manner to specific sites on pyr mRNA. This disrupts an antiterminator hairpin in the RNA and favors formation of a downstream transcription terminator, leading to a reduced expression of downstream genes. In terms of biological role, also displays a weak uracil phosphoribosyltransferase activity which is not physiologically significant. This Bacillus pumilus (strain SAFR-032) protein is Bifunctional protein PyrR.